The primary structure comprises 210 residues: Probable GTP-binding protein EngB (210 aa).

The EngB-type G domain maps to 30–204; that stretch reads QGYEVAFAGR…YKVLAGWMEL (175 aa). GTP contacts are provided by residues 38–45, 64–68, 82–85, 149–152, and 182–185; these read GRSNAGKS, GRTQL, DLPG, TKAD, and LFSA. Mg(2+) is bound by residues serine 45 and threonine 66.

This sequence belongs to the TRAFAC class TrmE-Era-EngA-EngB-Septin-like GTPase superfamily. EngB GTPase family. It depends on Mg(2+) as a cofactor.

Its function is as follows. Necessary for normal cell division and for the maintenance of normal septation. This chain is Probable GTP-binding protein EngB, found in Pseudomonas putida (strain W619).